Reading from the N-terminus, the 961-residue chain is DNA repair endonuclease XPF (961 aa).

Disordered regions lie at residues 1–27 (MADSCAENAAKGTENERPKEVEASADT), 451–485 (NYAKESQTRSAPPKNVSSNKELRREEVSGSQPPLA), and 674–693 (PTDENAKSRQAGGQAPQATK). Residues 13-22 (TENERPKEVE) are compositionally biased toward basic and acidic residues. A compositionally biased stretch (polar residues) spans 458–469 (TRSAPPKNVSSN). The ERCC4 domain occupies 697-777 (KVIVDMREFR…KPILLIEFDQ (81 aa)).

It belongs to the XPF family. Heterodimer. Interacts with hdm.

It is found in the nucleus. Implicated in recombination events during meiosis, mostly in meiotic exchange. May directly resolve Holliday junctions within recombination intermediates leading to DNA exchange. Also required for the repair of mismatches within meiotic heteroduplex DNA and for nucleotide excision repair. This Drosophila melanogaster (Fruit fly) protein is DNA repair endonuclease XPF (mei-9).